The following is a 193-amino-acid chain: MAVFLLKRGVWASLMIGGFGPRAVLFSKLGQNHARLSQATPEKLETSNEEEGSSSAQITAGVESDAENQRAELSEETVEVVFLDRSGQRIPVKGKVGESVLCLAHRYNIELEGACESSLACSTCHVYVNTEYFHKLPEPDEREDDMLDMAPLLQENSRLGCQIILTKQLNGAEFTLPKITRNFYVDGHVPKPH.

A disordered region spans residues 38 to 70 (QATPEKLETSNEEEGSSSAQITAGVESDAENQR). Residues 78 to 180 (VEVVFLDRSG…GAEFTLPKIT (103 aa)) enclose the 2Fe-2S ferredoxin-type domain. Cys-115, Cys-121, Cys-124, and Cys-161 together coordinate [2Fe-2S] cluster.

This sequence belongs to the adrenodoxin/putidaredoxin family. As to quaternary structure, component of the mitochondrial core iron-sulfur cluster (ISC) complex composed of NFS1, LYRM4, NDUFAB1, ISCU, FXN, and FDX2; this complex is a heterohexamer containing two copies of each monomer. The cofactor is [2Fe-2S] cluster.

It localises to the mitochondrion. Its subcellular location is the mitochondrion matrix. In terms of biological role, electron donor, of the core iron-sulfur cluster (ISC) assembly complex, that acts to reduce the persulfide into sulfide during [2Fe-2S] clusters assembly on the scaffolding protein ISCU. The core iron-sulfur cluster (ISC) assembly complex is involved in the de novo synthesis of a [2Fe-2S] cluster, the first step of the mitochondrial iron-sulfur protein biogenesis. This process is initiated by the cysteine desulfurase complex (NFS1:LYRM4:NDUFAB1) that produces persulfide which is delivered on the scaffold protein ISCU in a FXN-dependent manner. Then this complex is stabilized by FDX2 which provides reducing equivalents to accomplish the [2Fe-2S] cluster assembly. Finally, the [2Fe-2S] cluster is transferred from ISCU to chaperone proteins, including HSCB, HSPA9 and GLRX5. Essential for coenzyme Q biosynthesis: together with FDXR, transfers the electrons required for the hydroxylation reaction performed by COQ6. The sequence is that of Ferredoxin-2, mitochondrial from Xenopus laevis (African clawed frog).